We begin with the raw amino-acid sequence, 303 residues long: Caspase-7 (303 aa).

At Met1 the chain carries N-acetylmethionine. Residues 1-23 (MTDDQDCAAELEKVDSSSEDGVD) constitute a propeptide that is removed on maturation. The tract at residues 1-26 (MTDDQDCAAELEKVDSSSEDGVDAKP) is disordered. Residues 10-26 (ELEKVDSSSEDGVDAKP) are compositionally biased toward basic and acidic residues. Ser30 carries the phosphoserine modification. The interval 38-41 (KKKR) is exosite. The interval 76 to 87 (KNFDKATGMDVR) is loop L1. His144 is an active-site residue. The residue at position 173 (Thr173) is a Phosphothreonine. Cys186 is an active-site residue. Residues 187–196 (RGTELDDGIQ) form a loop L2 region. Positions 199 to 206 (SGPINDID) are excised as a propeptide. Positions 226–238 (VPGYYSWRNPGKG) are loop L3. At Ser239 the chain carries Phosphoserine. The interval 274 to 288 (ESQSDDPRFNEKKQI) is loop L4.

It belongs to the peptidase C14A family. In terms of assembly, heterotetramer that consists of two anti-parallel arranged heterodimers, each one formed by a 20 kDa (p20) and a 11 kDa (p11) subunit. Interacts with XIAP (via its second BIR domain); inhibiting CASP7 activity. Interacts with BIRC6/bruce. Interacts with ATXN3 (short isoform 1). Interacts with HSPA5. Post-translationally, cleavage by different proteases, such as granzyme B (GZMB), caspase-1 (CASP1), caspase-8 (CASP8) or caspase-9 (CASP9) generate the two active subunits. Its involvement in different programmed cell death processes is probably specified by the protease that activates CASP7. Cleaved and activated by initiator caspases (CASP8 and/or CASP9), leading to execution phase of apoptosis. Cleavage and maturation by GZMB regulates granzyme-mediated programmed cell death. Cleaved and activated by CASP1 in response to bacterial infection. Propeptide domains can also be cleaved efficiently by CASP3. Active heterodimers between the small subunit of caspase-7 and the large subunit of CASP3, and vice versa, also occur. Also cleaved at the N-terminus at alternative sites by CAPN1, leading to its activation. In terms of processing, phosphorylation at Ser-30 and Ser-239 by PAK2 inhibits its activity. Phosphorylation at Ser-30 prevents cleavage and activation by initiator caspase CASP9, while phosphorylation at Ser-239 prevents thiol protease activity by preventing substrate-binding. Ubiquitinated by BIRC6; this activity is inhibited by DIABLO/SMAC. Highly expressed in heart, lung, liver and kidney. Low levels in spleen, skeletal muscle and testis. No expression in the brain.

The protein resides in the cytoplasm. Its subcellular location is the cytosol. It is found in the nucleus. The protein localises to the secreted. It localises to the extracellular space. It carries out the reaction Strict requirement for an Asp residue at position P1 and has a preferred cleavage sequence of Asp-Glu-Val-Asp-|-.. With respect to regulation, during activation, the N-terminal disordered prodomain is removed by cleavage. Concomitantly, double cleavage gives rise to a large Caspase-7 subunit p20 and a small Caspase-7 subunit p11. The two large and two small subunits then assemble to form the active CASP7 complex. Can be cleaved and activated by different caspases, depending on the context. Cleaved and activated by initiator caspases (CASP8 and/or CASP9), leading to execution phase of apoptosis. Cleavage and maturation by GZMB regulates granzyme-mediated programmed cell death. Cleavage and maturation by CASP1 regulates pyroptosis. Inhibited by XIAP, which directly binds to the active site pocket and obstructs substrate entry. Phosphorylation at Ser-30 and Ser-239 by PAK2 inhibits its activity. Inhibited by BIRC6; following inhibition of BIRC6-caspase binding by DIABLO/SMAC, BIRC6 is subjected to caspase cleavage, leading to an increase in active caspases. Its function is as follows. Thiol protease involved in different programmed cell death processes, such as apoptosis, pyroptosis or granzyme-mediated programmed cell death, by proteolytically cleaving target proteins. Has a marked preference for Asp-Glu-Val-Asp (DEVD) consensus sequences, with some plasticity for alternate non-canonical sequences. Its involvement in the different programmed cell death processes is probably determined by upstream proteases that activate CASP7. Acts as an effector caspase involved in the execution phase of apoptosis: following cleavage and activation by initiator caspases (CASP8 and/or CASP9), mediates execution of apoptosis by catalyzing cleavage of proteins, such as CLSPN, PARP1, PTGES3 and YY1. Compared to CASP3, acts as a minor executioner caspase and cleaves a limited set of target proteins. Acts as a key regulator of the inflammatory response in response to bacterial infection by catalyzing cleavage and activation of the sphingomyelin phosphodiesterase SMPD1 in the extracellular milieu, thereby promoting membrane repair. Regulates pyroptosis in intestinal epithelial cells: cleaved and activated by CASP1 in response to S.typhimurium infection, promoting its secretion to the extracellular milieu, where it catalyzes activation of SMPD1, generating ceramides that repair membranes and counteract the action of gasdermin-D (GSDMD) pores. Regulates granzyme-mediated programmed cell death in hepatocytes: cleaved and activated by granzyme B (GZMB) in response to bacterial infection, promoting its secretion to the extracellular milieu, where it catalyzes activation of SMPD1, generating ceramides that repair membranes and counteract the action of perforin (PRF1) pores. Following cleavage by CASP1 in response to inflammasome activation, catalyzes processing and inactivation of PARP1, alleviating the transcription repressor activity of PARP1. Acts as an inhibitor of type I interferon production during virus-induced apoptosis by mediating cleavage of antiviral proteins CGAS, IRF3 and MAVS, thereby preventing cytokine overproduction. Cleaves and activates sterol regulatory element binding proteins (SREBPs). Cleaves phospholipid scramblase proteins XKR4, XKR8 and XKR9. Cleaves BIRC6 following inhibition of BIRC6-caspase binding by DIABLO/SMAC. In Mus musculus (Mouse), this protein is Caspase-7.